A 374-amino-acid polypeptide reads, in one-letter code: Bifunctional enzyme IspD/IspF (374 aa).

Residues 1 to 213 form a 2-C-methyl-D-erythritol 4-phosphate cytidylyltransferase region; sequence MLDVTLIVLC…PCLKAPSNNF (213 aa). Positions 214–374 are 2-C-methyl-D-erythritol 2,4-cyclodiphosphate synthase; it reads FTGTGFDIHA…TLKYYNWKKR (161 aa). Positions 220 and 222 each coordinate a divalent metal cation. 4-CDP-2-C-methyl-D-erythritol 2-phosphate contacts are provided by residues 220–222 and 246–247; these read DIH and HS. Residue histidine 254 participates in a divalent metal cation binding. 4-CDP-2-C-methyl-D-erythritol 2-phosphate contacts are provided by residues 268–270, 273–277, 344–347, phenylalanine 351, and arginine 354; these read DIG, FPDTD, and TTAE.

This sequence in the N-terminal section; belongs to the IspD/TarI cytidylyltransferase family. IspD subfamily. In the C-terminal section; belongs to the IspF family. The cofactor is a divalent metal cation.

The enzyme catalyses 2-C-methyl-D-erythritol 4-phosphate + CTP + H(+) = 4-CDP-2-C-methyl-D-erythritol + diphosphate. The catalysed reaction is 4-CDP-2-C-methyl-D-erythritol 2-phosphate = 2-C-methyl-D-erythritol 2,4-cyclic diphosphate + CMP. It functions in the pathway isoprenoid biosynthesis; isopentenyl diphosphate biosynthesis via DXP pathway; isopentenyl diphosphate from 1-deoxy-D-xylulose 5-phosphate: step 2/6. It participates in isoprenoid biosynthesis; isopentenyl diphosphate biosynthesis via DXP pathway; isopentenyl diphosphate from 1-deoxy-D-xylulose 5-phosphate: step 4/6. Functionally, bifunctional enzyme that catalyzes the formation of 4-diphosphocytidyl-2-C-methyl-D-erythritol from CTP and 2-C-methyl-D-erythritol 4-phosphate (MEP) (IspD), and catalyzes the conversion of 4-diphosphocytidyl-2-C-methyl-D-erythritol 2-phosphate (CDP-ME2P) to 2-C-methyl-D-erythritol 2,4-cyclodiphosphate (ME-CPP) with a corresponding release of cytidine 5-monophosphate (CMP) (IspF). This Aliarcobacter butzleri (strain RM4018) (Arcobacter butzleri) protein is Bifunctional enzyme IspD/IspF.